Reading from the N-terminus, the 405-residue chain is Serpin H1 (405 aa).

The N-terminal stretch at 1 to 15 is a signal peptide; the sequence is MQIFLVLALCGLAAA. N-linked (GlcNAc...) asparagine glycosylation is found at Asn107 and Asn112. Residues 402 to 405 carry the Prevents secretion from ER motif; sequence RDEL.

This sequence belongs to the serpin family.

The protein resides in the endoplasmic reticulum lumen. In terms of biological role, binds specifically to collagen. Could be involved as a chaperone in the biosynthetic pathway of collagen. The sequence is that of Serpin H1 (SERPINH1) from Gallus gallus (Chicken).